A 541-amino-acid chain; its full sequence is Chaperonin GroEL, cyanelle (541 aa).

ATP is bound by residues 29-32 (TLGP), 86-90 (DGTTT), Gly-413, 479-481 (NAA), and Asp-495.

It belongs to the chaperonin (HSP60) family. In terms of assembly, forms a cylinder of 14 subunits composed of two heptameric rings stacked back-to-back. Interacts with the co-chaperonin GroES.

It localises to the plastid. The protein localises to the cyanelle. It carries out the reaction ATP + H2O + a folded polypeptide = ADP + phosphate + an unfolded polypeptide.. Together with its co-chaperonin GroES, plays an essential role in assisting protein folding. The GroEL-GroES system forms a nano-cage that allows encapsulation of the non-native substrate proteins and provides a physical environment optimized to promote and accelerate protein folding. The chain is Chaperonin GroEL, cyanelle from Cyanophora paradoxa.